Here is a 268-residue protein sequence, read N- to C-terminus: Ribosomal RNA small subunit methyltransferase A (268 aa).

S-adenosyl-L-methionine-binding residues include asparagine 21, leucine 23, glycine 48, glutamate 69, aspartate 94, and asparagine 115.

Belongs to the class I-like SAM-binding methyltransferase superfamily. rRNA adenine N(6)-methyltransferase family. RsmA subfamily.

It is found in the cytoplasm. It carries out the reaction adenosine(1518)/adenosine(1519) in 16S rRNA + 4 S-adenosyl-L-methionine = N(6)-dimethyladenosine(1518)/N(6)-dimethyladenosine(1519) in 16S rRNA + 4 S-adenosyl-L-homocysteine + 4 H(+). Functionally, specifically dimethylates two adjacent adenosines (A1518 and A1519) in the loop of a conserved hairpin near the 3'-end of 16S rRNA in the 30S particle. May play a critical role in biogenesis of 30S subunits. The sequence is that of Ribosomal RNA small subunit methyltransferase A from Saccharophagus degradans (strain 2-40 / ATCC 43961 / DSM 17024).